The sequence spans 431 residues: Mediator of RNA polymerase II transcription subunit 2 (431 aa).

Position 6 is a phosphoserine (serine 6). Positions 105 to 140 (GKEKEKEREEAEKKRAEQENMRKVREQEELKKRQEL) are enriched in basic and acidic residues. The interval 105–178 (GKEKEKEREE…ANTTDANGSK (74 aa)) is disordered. The span at 143 to 152 (ASQQQQLQQN) shows a compositional bias: low complexity. Residues 162-178 (NFSTTAPANTTDANGSK) show a composition bias toward polar residues. Serine 208 carries the post-translational modification Phosphoserine; by CDK8. Residues 284-399 (NNINSTKNGK…GDNPPPADNG (116 aa)) form a disordered region. Residues 304–313 (NGDEKNKNNN) are compositionally biased toward basic and acidic residues. The segment covering 318–365 (NNNNSSEKNNNNNNNNNNNNDDNGNNNNNNSGNDNNNTTNNDSNNKNN) has biased composition (low complexity). Residues 366 to 387 (SITTGNDNENIVNNDLPTTVVS) show a composition bias toward polar residues.

This sequence belongs to the mediator complex subunit 2 family. Component of the Mediator complex, which is composed of at least 21 subunits that form three structurally distinct submodules. The Mediator head module contains MED6, MED8, MED11, SRB4/MED17, SRB5/MED18, ROX3/MED19, SRB2/MED20 and SRB6/MED22, the middle module contains MED1, MED4, NUT1/MED5, MED7, CSE2/MED9, NUT2/MED10, SRB7/MED21 and SOH1/MED31, and the tail module contains MED2, PGD1/MED3, RGR1/MED14, GAL11/MED15 and SIN4/MED16. The head and the middle modules interact directly with RNA polymerase II, whereas the elongated tail module interacts with gene-specific regulatory proteins.

Its subcellular location is the nucleus. Its function is as follows. Component of the Mediator complex, a coactivator involved in the regulated transcription of nearly all RNA polymerase II-dependent genes. Mediator functions as a bridge to convey information from gene-specific regulatory proteins to the basal RNA polymerase II transcription machinery. The Mediator complex, having a compact conformation in its free form, is recruited to promoters by direct interactions with regulatory proteins and serves for the assembly of a functional preinitiation complex with RNA polymerase II and the general transcription factors. The Mediator complex unfolds to an extended conformation and partially surrounds RNA polymerase II, specifically interacting with the unphosphorylated form of the C-terminal domain (CTD) of RNA polymerase II. The Mediator complex dissociates from the RNA polymerase II holoenzyme and stays at the promoter when transcriptional elongation begins. The chain is Mediator of RNA polymerase II transcription subunit 2 (MED2) from Saccharomyces cerevisiae (strain ATCC 204508 / S288c) (Baker's yeast).